Consider the following 92-residue polypeptide: uncharacterized protein (92 aa).

Over residues 1 to 10 (MGLLKKKDST) the composition is skewed to basic and acidic residues. Residues 1 to 21 (MGLLKKKDSTSARSSTSPCAD) form a disordered region. One can recognise a CHCH domain in the interval 16–66 (TSPCADLRNAYHNCFNKWYSEKFVKGQWDKEECVAEWKKYRDCLSENLDGK). Short sequence motifs (cx9C motif) lie at residues 19–29 (CADLRNAYHNC) and 48–58 (CVAEWKKYRDC). 2 cysteine pairs are disulfide-bonded: cysteine 19-cysteine 58 and cysteine 29-cysteine 48.

Belongs to the TRIAP1/MDM35 family.

This is an uncharacterized protein from Arabidopsis thaliana (Mouse-ear cress).